Consider the following 269-residue polypeptide: tRNA pseudouridine synthase A (269 aa).

Residue aspartate 55 is the Nucleophile of the active site. Residue tyrosine 111 coordinates substrate.

Belongs to the tRNA pseudouridine synthase TruA family.

The enzyme catalyses uridine(38/39/40) in tRNA = pseudouridine(38/39/40) in tRNA. In terms of biological role, formation of pseudouridine at positions 38, 39 and 40 in the anticodon stem and loop of transfer RNAs. This Methanosarcina barkeri (strain Fusaro / DSM 804) protein is tRNA pseudouridine synthase A.